We begin with the raw amino-acid sequence, 464 residues long: Glucose-6-phosphate isomerase (464 aa).

E290 serves as the catalytic Proton donor. Active-site residues include H319 and K433.

Belongs to the GPI family.

It is found in the cytoplasm. It carries out the reaction alpha-D-glucose 6-phosphate = beta-D-fructose 6-phosphate. It participates in carbohydrate biosynthesis; gluconeogenesis. Its pathway is carbohydrate degradation; glycolysis; D-glyceraldehyde 3-phosphate and glycerone phosphate from D-glucose: step 2/4. In terms of biological role, catalyzes the reversible isomerization of glucose-6-phosphate to fructose-6-phosphate. This chain is Glucose-6-phosphate isomerase, found in Carboxydothermus hydrogenoformans (strain ATCC BAA-161 / DSM 6008 / Z-2901).